The sequence spans 217 residues: ATP-binding protein BexA (217 aa).

In terms of domain architecture, ABC transporter spans 2 to 217 (IRVNNVCKKY…AYQYYNETQK (216 aa)). 38–45 (GRNGAGKS) contributes to the ATP binding site.

This sequence belongs to the ABC transporter superfamily.

The protein localises to the cell inner membrane. Functionally, putative ATP-binding protein, and an energy-coupling component of capsule polysaccharide export apparatus. In Haemophilus influenzae, this protein is ATP-binding protein BexA (bexA).